The following is a 280-amino-acid chain: Coiled-coil domain-containing protein 106 (280 aa).

Residues 63–101 adopt a coiled-coil conformation; the sequence is TQLHMALERNSWLQKRIEDLEEERDFLRCQLDKFISSAR. Basic and acidic residues predominate over residues 103 to 121; that stretch reads EAEDHCRMKPGPRRMEGDS. Residues 103–176 are disordered; it reads EAEDHCRMKP…KPKARERQRV (74 aa). The residue at position 130 (Ser130) is a Phosphoserine. The segment covering 133-146 has biased composition (low complexity); the sequence is ESAASSLSGASEEG. The short motif at 151 to 164 is the Bipartite nuclear localization signal element; sequence RRRQKQKGGASRRR. Residues 152-168 are compositionally biased toward basic residues; that stretch reads RRQKQKGGASRRRFGKP.

Interacts with p53/TP53.

It is found in the nucleus. Its function is as follows. Promotes the degradation of p53/TP53 protein and inhibits its transactivity. The polypeptide is Coiled-coil domain-containing protein 106 (CCDC106) (Homo sapiens (Human)).